Consider the following 498-residue polypeptide: Probable cytosol aminopeptidase (498 aa).

Mn(2+) contacts are provided by lysine 269 and aspartate 274. Lysine 281 is an active-site residue. Mn(2+) contacts are provided by aspartate 292, aspartate 351, and glutamate 353. Arginine 355 is a catalytic residue.

It belongs to the peptidase M17 family. Mn(2+) is required as a cofactor.

Its subcellular location is the cytoplasm. It carries out the reaction Release of an N-terminal amino acid, Xaa-|-Yaa-, in which Xaa is preferably Leu, but may be other amino acids including Pro although not Arg or Lys, and Yaa may be Pro. Amino acid amides and methyl esters are also readily hydrolyzed, but rates on arylamides are exceedingly low.. The enzyme catalyses Release of an N-terminal amino acid, preferentially leucine, but not glutamic or aspartic acids.. In terms of biological role, presumably involved in the processing and regular turnover of intracellular proteins. Catalyzes the removal of unsubstituted N-terminal amino acids from various peptides. The protein is Probable cytosol aminopeptidase of Glaesserella parasuis serovar 5 (strain SH0165) (Haemophilus parasuis).